A 383-amino-acid polypeptide reads, in one-letter code: S-adenosylmethionine synthase (383 aa).

His15 serves as a coordination point for ATP. Residue Asp17 participates in Mg(2+) binding. Glu43 contributes to the K(+) binding site. L-methionine is bound by residues Glu56 and Gln99. The segment at 99-109 is flexible loop; the sequence is QSSDINQGVDR. ATP-binding positions include 164 to 166, 230 to 231, Asp239, 245 to 246, Ala262, and Lys266; these read DAK, RF, and RK. Position 239 (Asp239) interacts with L-methionine. Lys270 contacts L-methionine.

It belongs to the AdoMet synthase family. In terms of assembly, homotetramer; dimer of dimers. Mg(2+) is required as a cofactor. Requires K(+) as cofactor.

The protein localises to the cytoplasm. The catalysed reaction is L-methionine + ATP + H2O = S-adenosyl-L-methionine + phosphate + diphosphate. The protein operates within amino-acid biosynthesis; S-adenosyl-L-methionine biosynthesis; S-adenosyl-L-methionine from L-methionine: step 1/1. Catalyzes the formation of S-adenosylmethionine (AdoMet) from methionine and ATP. The overall synthetic reaction is composed of two sequential steps, AdoMet formation and the subsequent tripolyphosphate hydrolysis which occurs prior to release of AdoMet from the enzyme. In Mannheimia succiniciproducens (strain KCTC 0769BP / MBEL55E), this protein is S-adenosylmethionine synthase.